Here is a 311-residue protein sequence, read N- to C-terminus: Methionyl-tRNA formyltransferase (311 aa).

109 to 112 (SLLP) is a (6S)-5,6,7,8-tetrahydrofolate binding site.

Belongs to the Fmt family.

The enzyme catalyses L-methionyl-tRNA(fMet) + (6R)-10-formyltetrahydrofolate = N-formyl-L-methionyl-tRNA(fMet) + (6S)-5,6,7,8-tetrahydrofolate + H(+). Functionally, attaches a formyl group to the free amino group of methionyl-tRNA(fMet). The formyl group appears to play a dual role in the initiator identity of N-formylmethionyl-tRNA by promoting its recognition by IF2 and preventing the misappropriation of this tRNA by the elongation apparatus. In Staphylococcus aureus (strain JH1), this protein is Methionyl-tRNA formyltransferase.